The sequence spans 456 residues: 3-isopropylmalate dehydratase large subunit (456 aa).

The [4Fe-4S] cluster site is built by Cys336, Cys396, and Cys399.

The protein belongs to the aconitase/IPM isomerase family. LeuC type 1 subfamily. Heterodimer of LeuC and LeuD. It depends on [4Fe-4S] cluster as a cofactor.

The catalysed reaction is (2R,3S)-3-isopropylmalate = (2S)-2-isopropylmalate. It functions in the pathway amino-acid biosynthesis; L-leucine biosynthesis; L-leucine from 3-methyl-2-oxobutanoate: step 2/4. Catalyzes the isomerization between 2-isopropylmalate and 3-isopropylmalate, via the formation of 2-isopropylmaleate. This chain is 3-isopropylmalate dehydratase large subunit, found in Staphylococcus aureus (strain JH1).